The sequence spans 103 residues: Histone H4 (103 aa).

Residues 1 to 14 (MSGRGKGGKGLGKG) show a composition bias toward gly residues. Residues 1–20 (MSGRGKGGKGLGKGGAKRHR) are disordered. Ser2 carries the N-acetylserine modification. The residue at position 17 (Lys17) is an N6-acetyllysine. A DNA-binding region spans residues 17 to 21 (KRHRR). Lys80 bears the N6-methylated lysine mark.

The protein belongs to the histone H4 family. The nucleosome is a histone octamer containing two molecules each of H2A, H2B, H3 and H4 assembled in one H3-H4 heterotetramer and two H2A-H2B heterodimers. The octamer wraps approximately 147 bp of DNA.

It localises to the nucleus. Its subcellular location is the chromosome. Core component of nucleosome. Nucleosomes wrap and compact DNA into chromatin, limiting DNA accessibility to the cellular machineries which require DNA as a template. Histones thereby play a central role in transcription regulation, DNA repair, DNA replication and chromosomal stability. DNA accessibility is regulated via a complex set of post-translational modifications of histones, also called histone code, and nucleosome remodeling. The polypeptide is Histone H4 (Olisthodiscus luteus (Marine phytoflagellate)).